A 603-amino-acid chain; its full sequence is Myotubularin (603 aa).

The segment covering methionine 1–serine 13 has biased composition (polar residues). The tract at residues methionine 1–aspartate 25 is disordered. 2 positions are modified to phosphoserine: serine 13 and serine 18. The span at leucine 14–aspartate 25 shows a compositional bias: basic and acidic residues. Positions arginine 29–glycine 97 constitute a GRAM domain. Residues glycine 163–tyrosine 538 form the Myotubularin phosphatase domain. Positions 288, 313, and 314 each coordinate a 1,2-diacyl-sn-glycero-3-phospho-(1D-myo-inositol-3,5-bisphosphate). Asparagine 288, asparagine 313, and isoleucine 314 together coordinate a 1,2-diacyl-sn-glycero-3-phospho-(1D-myo-inositol-3-phosphate). Cysteine 375 (phosphocysteine intermediate) is an active-site residue. Residues serine 376, aspartate 377, glycine 378, tryptophan 379, aspartate 380, arginine 381, lysine 417, and arginine 421 each coordinate a 1,2-diacyl-sn-glycero-3-phospho-(1D-myo-inositol-3,5-bisphosphate). A 1,2-diacyl-sn-glycero-3-phospho-(1D-myo-inositol-3-phosphate)-binding residues include serine 376, aspartate 377, glycine 378, tryptophan 379, aspartate 380, and arginine 381. Arginine 421 is an a 1,2-diacyl-sn-glycero-3-phospho-(1D-myo-inositol-3-phosphate) binding site. Threonine 495 carries the post-translational modification Phosphothreonine. Residues serine 579–phenylalanine 603 form a disordered region. Serine 588 carries the phosphoserine modification.

Belongs to the protein-tyrosine phosphatase family. Non-receptor class myotubularin subfamily. As to quaternary structure, heterodimer with MTMR12. Interacts with KMT2A/MLL1 (via SET domain). Interacts with DES in skeletal muscle but not in cardiac muscle. Interacts with SPEG.

Its subcellular location is the cytoplasm. It is found in the cell membrane. The protein localises to the cell projection. It localises to the filopodium. The protein resides in the ruffle. Its subcellular location is the late endosome. It is found in the myofibril. The protein localises to the sarcomere. The catalysed reaction is a 1,2-diacyl-sn-glycero-3-phospho-(1D-myo-inositol-3-phosphate) + H2O = a 1,2-diacyl-sn-glycero-3-phospho-(1D-myo-inositol) + phosphate. It carries out the reaction a 1,2-diacyl-sn-glycero-3-phospho-(1D-myo-inositol-3,5-bisphosphate) + H2O = a 1,2-diacyl-sn-glycero-3-phospho-(1D-myo-inositol-5-phosphate) + phosphate. The enzyme catalyses 1,2-dioctanoyl-sn-glycero-3-phospho-(1-D-myo-inositol-3-phosphate) + H2O = 1,2-dioctanoyl-sn-glycero-3-phospho-(1D-myo-inositol) + phosphate. It catalyses the reaction 1,2-dioctanoyl-sn-glycero-3-phospho-(1D-myo-inositol-3,5-bisphosphate) + H2O = 1,2-dioctanoyl-sn-glycero-3-phospho-(1D-myo-inositol-5-phosphate) + phosphate. The catalysed reaction is 1,2-dihexadecanoyl-sn-glycero-3-phospho-(1D-myo-inositol-3,5-phosphate) + H2O = 1,2-dihexadecanoyl-sn-glycero-3-phospho-(1D-myo-inositol-5-phosphate) + phosphate. Its activity is regulated as follows. Allosterically activated by phosphatidylinositol 5-phosphate (PI5P). Lipid phosphatase which dephosphorylates phosphatidylinositol 3-monophosphate (PI3P) and phosphatidylinositol 3,5-bisphosphate (PI(3,5)P2). Has also been shown to dephosphorylate phosphotyrosine- and phosphoserine-containing peptides. Negatively regulates EGFR degradation through regulation of EGFR trafficking from the late endosome to the lysosome. Plays a role in vacuolar formation and morphology. Regulates desmin intermediate filament assembly and architecture. Plays a role in mitochondrial morphology and positioning. Required for skeletal muscle maintenance but not for myogenesis. In skeletal muscles, stabilizes MTMR12 protein levels. This is Myotubularin from Homo sapiens (Human).